The primary structure comprises 142 residues: Large ribosomal subunit protein uL13 (142 aa).

Belongs to the universal ribosomal protein uL13 family. As to quaternary structure, part of the 50S ribosomal subunit.

This protein is one of the early assembly proteins of the 50S ribosomal subunit, although it is not seen to bind rRNA by itself. It is important during the early stages of 50S assembly. This Sodalis glossinidius (strain morsitans) protein is Large ribosomal subunit protein uL13.